The primary structure comprises 189 residues: Ras-like protein 1 (189 aa).

GTP is bound at residue 10 to 17 (GAGGVGKS). Positions 32–40 (YDPTIEDSY) match the Effector region motif. GTP contacts are provided by residues 57–61 (DTAGQ) and 116–119 (NKCD). A Cysteine methyl ester modification is found at C186. C186 carries the S-geranylgeranyl cysteine lipid modification. Positions 187–189 (KML) are cleaved as a propeptide — removed in mature form.

This sequence belongs to the small GTPase superfamily. Ras family.

It is found in the cell membrane. It catalyses the reaction GTP + H2O = GDP + phosphate + H(+). Its activity is regulated as follows. Alternates between an inactive form bound to GDP and an active form bound to GTP. Activated by a guanine nucleotide-exchange factor (GEF) and inactivated by a GTPase-activating protein (GAP). Functionally, ras proteins bind GDP/GTP and possess intrinsic GTPase activity. Plays a role in eye development by regulating cell growth, survival of postmitotic ommatidial cells and differentiation of photoreceptor cells. During larval development, mediates Ptth/tor signaling leading to the production of ecdysone, a hormone required for the initiation of metamorphosis. The protein is Ras-like protein 1 of Drosophila grimshawi (Hawaiian fruit fly).